We begin with the raw amino-acid sequence, 254 residues long: Glc operon transcriptional activator (254 aa).

The 69-residue stretch at 6–74 folds into the HTH gntR-type domain; sequence RPICEVVAES…QGRDSRVARL (69 aa). Residues 34 to 53 constitute a DNA-binding region (H-T-H motif); that stretch reads ERRLCEKLGFSRSALREGLT.

In terms of biological role, transcriptional activator of the glcDEFGB operon which is associated with glycolate utilization, and encodes malate synthase G and the genes needed for glycolate oxidase activity. Also negatively regulates the transcription of its own gene. Glycolate acts as an effector, but GlcC can also use acetate as an alternative effector. This Escherichia coli O6:H1 (strain CFT073 / ATCC 700928 / UPEC) protein is Glc operon transcriptional activator (glcC).